The following is a 188-amino-acid chain: Large ribosomal subunit protein eL18 (188 aa).

Residues 143–188 (RSAREAEKHFGPAPGVPHSHTKPHVRSKGRKFERARGRRASRAYKN) are disordered. Composition is skewed to basic residues over residues 161–171 (SHTKPHVRSKG) and 178–188 (RGRRASRAYKN).

The protein belongs to the eukaryotic ribosomal protein eL18 family.

It is found in the cytoplasm. The polypeptide is Large ribosomal subunit protein eL18 (rpl-18) (Caenorhabditis briggsae).